A 303-amino-acid chain; its full sequence is Methionyl-tRNA formyltransferase (303 aa).

110-113 (SLLP) lines the (6S)-5,6,7,8-tetrahydrofolate pocket.

Belongs to the Fmt family.

It carries out the reaction L-methionyl-tRNA(fMet) + (6R)-10-formyltetrahydrofolate = N-formyl-L-methionyl-tRNA(fMet) + (6S)-5,6,7,8-tetrahydrofolate + H(+). In terms of biological role, attaches a formyl group to the free amino group of methionyl-tRNA(fMet). The formyl group appears to play a dual role in the initiator identity of N-formylmethionyl-tRNA by promoting its recognition by IF2 and preventing the misappropriation of this tRNA by the elongation apparatus. The polypeptide is Methionyl-tRNA formyltransferase (Ehrlichia ruminantium (strain Welgevonden)).